Here is a 421-residue protein sequence, read N- to C-terminus: CinA-like protein (421 aa).

The protein belongs to the CinA family.

The protein is CinA-like protein of Mycobacterium sp. (strain MCS).